The following is a 1062-amino-acid chain: 3-hydroxy-3-methylglutaryl-coenzyme A reductase 2 (1062 aa).

Residues 1 to 34 are Cytoplasmic-facing; the sequence is MAPTNTKDSDTPGWLHRHGTSVLGSVARQACKQP. The chain crosses the membrane as a helical span at residues 35 to 55; sequence IYTLVITALLATMTYTSLLEG. Topologically, residues 56 to 230 are lumenal; sequence SLYNANLTRL…SFVGLIKHAQ (175 aa). Asparagine 61 carries N-linked (GlcNAc...) asparagine glycosylation. Residues 231–251 form a helical membrane-spanning segment; the sequence is IIDIIIMLLAYLAMHLTFLSL. The SSD domain occupies 233-403; that stretch reads DIIIMLLAYL…FTFYISVLCV (171 aa). The Cytoplasmic portion of the chain corresponds to 252–261; that stretch reads FMSMRQLGSR. The chain crosses the membrane as a helical span at residues 262 to 282; the sequence is FWLAYSVLLSGFFSLFFGLKV. Residues 283-287 are Lumenal-facing; that stretch reads TTSSG. The chain crosses the membrane as a helical span at residues 288–308; that stretch reads VSTSMITLSECLPILVIIVGF. At 309–355 the chain is on the cytoplasmic side; it reads EKPIRLTRAVLRAATESYLPAKPMARRSTPEAIEVAIMREGWRIVRD. Residues 356–375 traverse the membrane as a helical segment; sequence YAIEIAILAAGATSRVQGAL. The Lumenal segment spans residues 376–377; sequence PQ. Residues 378–398 traverse the membrane as a helical segment; sequence FCFLAAWILLFDSLLLFTFYI. The Cytoplasmic segment spans residues 399–450; sequence SVLCVKLEITRIRKHVEPRRALEDDDISTGNQDFDSRVFGCKVKAANISRFK. The chain crosses the membrane as a helical span at residues 451–471; that stretch reads FLMVGGFVLFNVLQLSSLTYG. Over 472–564 the chain is Lumenal; the sequence is NVRVSDWMPY…GCVLAWLEDP (93 aa). N-linked (GlcNAc...) asparagine glycosylation is present at asparagine 484. The helical transmembrane segment at 565 to 585 threads the bilayer; sequence VISKWVIAALFLSLVLNSYLM. The Cytoplasmic segment spans residues 586–1062; the sequence is KAARWNLRQS…NRSKVAAKTG (477 aa). The active-site Charge relay system is the glutamate 744. CoA is bound at residue 750 to 756; it reads SASRGCK. Residues 811-813 and 838-846 contribute to the NADP(+) site; these read SRF and DAMGMNMIS. Catalysis depends on lysine 877, which acts as the Charge relay system. A CoA-binding site is contributed by 906 to 908; the sequence is VLK. The active-site Charge relay system is the aspartate 953. 1048 to 1049 contacts CoA; sequence AH. Catalysis depends on histidine 1049, which acts as the Proton donor. NADP(+) is bound at residue 1053–1054; that stretch reads NR.

This sequence belongs to the HMG-CoA reductase family.

It is found in the endoplasmic reticulum membrane. The enzyme catalyses (R)-mevalonate + 2 NADP(+) + CoA = (3S)-3-hydroxy-3-methylglutaryl-CoA + 2 NADPH + 2 H(+). It functions in the pathway metabolic intermediate biosynthesis; (R)-mevalonate biosynthesis; (R)-mevalonate from acetyl-CoA: step 3/3. Functionally, HMG-CoA reductase; part of the first module of ergosterol biosynthesis pathway that includes the early steps of the pathway, conserved across all eukaryotes, and which results in the formation of mevalonate from acetyl-coenzyme A (acetyl-CoA). Hmg1 and hmg2 catalyze the reduction of hydroxymethylglutaryl-CoA (HMG-CoA) to mevalonate. The first module starts with the action of the cytosolic acetyl-CoA acetyltransferase erg10B that catalyzes the formation of acetoacetyl-CoA. The hydroxymethylglutaryl-CoA synthases erg13A and erg13B then condense acetyl-CoA with acetoacetyl-CoA to form HMG-CoA. The rate-limiting step of the early module is the reduction to mevalonate by the 3-hydroxy-3-methylglutaryl-coenzyme A (HMG-CoA) reductases hmg1 and hmg2. Mevalonate is also a precursor for the extracellular siderophore triacetylfusarinine C (TAFC). The protein is 3-hydroxy-3-methylglutaryl-coenzyme A reductase 2 of Aspergillus fumigatus (strain ATCC MYA-4609 / CBS 101355 / FGSC A1100 / Af293) (Neosartorya fumigata).